A 284-amino-acid polypeptide reads, in one-letter code: Putative ABC transporter ATP-binding protein SCO5958 (284 aa).

Residues 15–250 form the ABC transporter domain; the sequence is VALRGAAFAY…DLLRRAGLRL (236 aa). Position 48–55 (48–55) interacts with ATP; sequence GRNGSGKT.

Belongs to the ABC transporter superfamily.

It localises to the cell membrane. Its function is as follows. Probably part of an ABC transporter complex. Responsible for energy coupling to the transport system. The polypeptide is Putative ABC transporter ATP-binding protein SCO5958 (Streptomyces coelicolor (strain ATCC BAA-471 / A3(2) / M145)).